The chain runs to 404 residues: Sulfate adenylyltransferase (404 aa).

Belongs to the sulfate adenylyltransferase family.

It carries out the reaction sulfate + ATP + H(+) = adenosine 5'-phosphosulfate + diphosphate. It functions in the pathway sulfur metabolism; hydrogen sulfide biosynthesis; sulfite from sulfate: step 1/3. This is Sulfate adenylyltransferase from Chlorobium chlorochromatii (strain CaD3).